Here is a 359-residue protein sequence, read N- to C-terminus: Cyclic AMP response element-binding protein B (359 aa).

2 disordered regions span residues 1-73 (MDNS…AQGG) and 185-238 (VRNK…FTEI). Low complexity predominate over residues 9–32 (NGNSSAASGSNDVVDVVAQQAAAA). Residues 33-47 (VGGGGGGGGGGGGGN) are compositionally biased toward gly residues. Positions 48-70 (PQQQQQNPQSTTAGGPTGATNNA) are enriched in low complexity. Positions 198–257 (KPEPNTQHPEDSDESLSDDDSQHHRSELTRRPSYNKIFTEISGPDMSGASLPMSDGVLNS) constitute a KID domain. Phosphoserine occurs at positions 209, 212, and 214. Basic and acidic residues predominate over residues 217–227 (DSQHHRSELTR). Positions 300-359 (TRKREIRLQKNREAARECRRKKKEYIKCLENRVAVLENQNKALIEELKSLKELYCQTKND) constitute a bZIP domain. The basic motif stretch occupies residues 301 to 326 (RKREIRLQKNREAARECRRKKKEYIK). The leucine-zipper stretch occupies residues 328–349 (LENRVAVLENQNKALIEELKSL).

This sequence belongs to the bZIP family. ATF subfamily. In terms of assembly, homodimer. In terms of tissue distribution, most cells of the adult brain; cell bodies, but not neuropil.

Its subcellular location is the nucleus. Its function is as follows. Isoform E is a PKA-dependent transcriptional activator. Isoform J is a direct antagonist of activation by isoform E in cell culture. Binds the cAMP response element (CRE) (consensus: 5'-GTGACGT[AC][AG]-3'), a sequence present in many viral and cellular promoters. Has a role in long-term memory. This is Cyclic AMP response element-binding protein B from Drosophila melanogaster (Fruit fly).